The chain runs to 560 residues: Membrane protein insertase YidC (560 aa).

6 helical membrane passes run 5–25 (IINL…WQYF), 334–354 (AIDF…MNFF), 357–377 (YVGN…LLMF), 431–451 (LPIL…YVTI), 476–496 (LFGL…WPIL), and 522–542 (FMPL…LIYW).

It belongs to the OXA1/ALB3/YidC family. Type 1 subfamily. Interacts with the Sec translocase complex via SecD. Specifically interacts with transmembrane segments of nascent integral membrane proteins during membrane integration.

The protein resides in the cell inner membrane. Functionally, required for the insertion and/or proper folding and/or complex formation of integral membrane proteins into the membrane. Involved in integration of membrane proteins that insert both dependently and independently of the Sec translocase complex, as well as at least some lipoproteins. Aids folding of multispanning membrane proteins. This Rickettsia massiliae (strain Mtu5) protein is Membrane protein insertase YidC.